The chain runs to 527 residues: Acyl-coenzyme A thioesterase 4, mitochondrial (527 aa).

The N-terminal 75 residues, 1–75 (MMTPIGIRIR…FLFDPPPIRF (75 aa)), are a transit peptide targeting the mitochondrion. HotDog ACOT-type domains lie at 172 to 294 (ILYN…RDSK) and 370 to 487 (KDTC…GPEA).

This sequence belongs to the acyl coenzyme A hydrolase family. In terms of tissue distribution, mostly expressed at low levels in glandular trichomes (lupulin glands), and, to a lower extent, in stems, leaves, flowers and cones.

It localises to the mitochondrion. The catalysed reaction is 2-methylpropanoyl-CoA + H2O = 2-methylpropanoate + CoA + H(+). The enzyme catalyses propanoyl-CoA + H2O = propanoate + CoA + H(+). It carries out the reaction octanoyl-CoA + H2O = octanoate + CoA + H(+). It catalyses the reaction butanoyl-CoA + H2O = butanoate + CoA + H(+). The catalysed reaction is 3-methylbutanoyl-CoA + H2O = 3-methylbutanoate + CoA + H(+). The enzyme catalyses 2-methylbutanoyl-CoA + H2O = 2-methylbutanoate + CoA + H(+). Its function is as follows. Acyl-CoA thioesterases are a group of enzymes that catalyze the hydrolysis of acyl-CoAs to the free fatty acid and coenzyme A (CoASH), providing the potential to regulate intracellular levels of acyl-CoAs, free fatty acids and CoASH. Active on acyl CoAs with short chains (propanoyl-CoA and butanoyl-CoA), branched short chains (2-methylpropanoyl-CoA, 2-methylbutanoyl-CoA and 3-methylbutanoyl-CoA) and medium chains (octanoyl-CoA). The chain is Acyl-coenzyme A thioesterase 4, mitochondrial from Humulus lupulus (European hop).